A 354-amino-acid chain; its full sequence is Methionine import ATP-binding protein MetN (354 aa).

An ABC transporter domain is found at 8–250 (LDHIDITFHQ…PREDLTKDFI (243 aa)). 42–49 (GYSGAGKS) provides a ligand contact to ATP.

The protein belongs to the ABC transporter superfamily. Methionine importer (TC 3.A.1.24) family. The complex is composed of two ATP-binding proteins (MetN), two transmembrane proteins (MetI) and a solute-binding protein (MetQ).

It is found in the cell membrane. The enzyme catalyses L-methionine(out) + ATP + H2O = L-methionine(in) + ADP + phosphate + H(+). It catalyses the reaction D-methionine(out) + ATP + H2O = D-methionine(in) + ADP + phosphate + H(+). In terms of biological role, part of the ABC transporter complex MetNIQ involved in methionine import. Responsible for energy coupling to the transport system. The polypeptide is Methionine import ATP-binding protein MetN (Streptococcus mutans serotype c (strain ATCC 700610 / UA159)).